The chain runs to 214 residues: Riboflavin kinase (214 aa).

Residues 1 to 26 are disordered; that stretch reads MRPDGPRDPVVGPDSGPEPPYPVRLS. Residues Thr-44 and Asn-46 each coordinate Mg(2+). Glu-112 (nucleophile) is an active-site residue.

Belongs to the flavokinase family. Requires Zn(2+) as cofactor. It depends on Mg(2+) as a cofactor.

The enzyme catalyses riboflavin + ATP = FMN + ADP + H(+). Its pathway is cofactor biosynthesis; FMN biosynthesis; FMN from riboflavin (ATP route): step 1/1. Catalyzes the phosphorylation of riboflavin (vitamin B2) to form flavin mononucleotide (FMN) coenzyme. This chain is Riboflavin kinase (fmn1), found in Aspergillus clavatus (strain ATCC 1007 / CBS 513.65 / DSM 816 / NCTC 3887 / NRRL 1 / QM 1276 / 107).